The chain runs to 197 residues: MTSLYLASGSPRRQELLAQLGVTFERIVTGIEEQRQPQESAQQYVVRLACEKAQAGVAQTAQDLPVLGADTIVILNGEVLEKPRDAEHAAQMLRKLSGQTHQVMTAVALADSQHILDCLVVTDVTFRTLTDEDIAGYVASGEPLDKAGAYGIQGLGGCFVRKINGSYHAVVGLPLVETYELLSNFNALREKRDKHDG.

Catalysis depends on Asp-70, which acts as the Proton acceptor.

This sequence belongs to the Maf family. YhdE subfamily. The cofactor is a divalent metal cation.

The protein resides in the cytoplasm. It carries out the reaction dTTP + H2O = dTMP + diphosphate + H(+). The enzyme catalyses UTP + H2O = UMP + diphosphate + H(+). Its function is as follows. Nucleoside triphosphate pyrophosphatase that hydrolyzes dTTP and UTP. May have a dual role in cell division arrest and in preventing the incorporation of modified nucleotides into cellular nucleic acids. This Shigella dysenteriae serotype 1 (strain Sd197) protein is dTTP/UTP pyrophosphatase (yceF).